Consider the following 132-residue polypeptide: ATP synthase epsilon chain (132 aa).

Belongs to the ATPase epsilon chain family. F-type ATPases have 2 components, CF(1) - the catalytic core - and CF(0) - the membrane proton channel. CF(1) has five subunits: alpha(3), beta(3), gamma(1), delta(1), epsilon(1). CF(0) has four main subunits: a, b, b' and c.

The protein resides in the cellular chromatophore membrane. Functionally, produces ATP from ADP in the presence of a proton gradient across the membrane. The protein is ATP synthase epsilon chain (atpC) of Rhodobacter capsulatus (Rhodopseudomonas capsulata).